A 443-amino-acid chain; its full sequence is Tubulin epsilon and delta complex protein 2 (443 aa).

Positions 8–33 (RRLVAELRDALDSCAERQRQLEQSLR) form a coiled coil. Disordered regions lie at residues 45–72 (AETP…PSPQ) and 93–146 (GLSK…PWVP). A compositionally biased stretch (low complexity) spans 106-124 (LKSGSASTATKASAPPSTS).

In terms of assembly, interacts with TEDC1. Found in a complex with TEDC1, TEDC2, TUBE1 and TUBD1.

It is found in the cell projection. The protein resides in the cilium. It localises to the cytoplasm. Its subcellular location is the cytoskeleton. The protein localises to the microtubule organizing center. It is found in the centrosome. The protein resides in the centriole. Functionally, acts as a positive regulator of ciliary hedgehog signaling. Required for centriole stability. The chain is Tubulin epsilon and delta complex protein 2 from Bos taurus (Bovine).